The chain runs to 1374 residues: Serine/threonine-protein kinase LMTK1 (1374 aa).

Residues Leu32 to Cys52 traverse the membrane as a helical segment. The Protein kinase domain occupies Leu125–Leu395. Residues Ile131–Val139 and Lys156 each bind ATP. Asp253 serves as the catalytic Proton acceptor. Ser495 is subject to Phosphoserine. 5 disordered regions span residues Gly542–Gly622, Val667–Leu731, Trp765–Pro1195, Gln1245–Asp1302, and Ala1320–Ala1374. Low complexity predominate over residues Pro606–Ala620. The span at Ser680–Ser690 shows a compositional bias: polar residues. 3 stretches are compositionally biased toward low complexity: residues Pro719–Leu731, Ser801–Thr831, and Ser847–Pro856. Residues Glu865–Gly878 are compositionally biased toward polar residues. The span at Pro900–Asp914 shows a compositional bias: low complexity. Positions Arg978–Asn987 are enriched in polar residues. At Ser1029 the chain carries Phosphoserine. The span at Glu1063 to Pro1073 shows a compositional bias: polar residues. Positions Thr1138–Glu1155 are enriched in low complexity. The segment covering Pro1158–Glu1173 has biased composition (acidic residues). 5 positions are modified to phosphoserine: Ser1168, Ser1171, Ser1184, Ser1187, and Ser1262. Polar residues predominate over residues Gly1272–Thr1291. Pro residues predominate over residues Ala1321 to Ala1332. The segment covering Phe1337–Val1352 has biased composition (polar residues). Positions Ser1353–Pro1363 are enriched in basic and acidic residues. Residues Ala1365–Ala1374 show a composition bias toward gly residues.

The protein belongs to the protein kinase superfamily. Tyr protein kinase family. Interacts with CDK5. Autophosphorylated. Phosphorylated by CDK5. As to expression, expressed in brain.

Its subcellular location is the membrane. It localises to the cytoplasm. The protein localises to the perinuclear region. The catalysed reaction is L-seryl-[protein] + ATP = O-phospho-L-seryl-[protein] + ADP + H(+). The enzyme catalyses L-threonyl-[protein] + ATP = O-phospho-L-threonyl-[protein] + ADP + H(+). Its function is as follows. May be involved in neuronal differentiation. The polypeptide is Serine/threonine-protein kinase LMTK1 (AATK) (Homo sapiens (Human)).